Consider the following 163-residue polypeptide: Probable ribosome biogenesis protein RLP24 (163 aa).

Belongs to the eukaryotic ribosomal protein eL24 family. In terms of assembly, associated with nucleolar and cytoplasmic pre-60S particles. At the end of biogenesis it dissociates from cytoplasmic pre-60S particles and is likely to be exchanged for its ribosomal homolog, RPL24.

Its subcellular location is the nucleus. It is found in the nucleolus. Its function is as follows. Involved in the biogenesis of the 60S ribosomal subunit. Ensures the docking of GTPBP4/NOG1 to pre-60S particles. This Pongo abelii (Sumatran orangutan) protein is Probable ribosome biogenesis protein RLP24 (RSL24D1).